A 306-amino-acid chain; its full sequence is D-alanine--D-alanine ligase (306 aa).

Active-site residues include E15 and S150. The ATP-grasp domain maps to 101 to 303; that stretch reads KLLWKSLSLR…FDELILKILK (203 aa). 134–189 lines the ATP pocket; sequence ILKLKFPVVIKPNNAGSSIGITIVNHPDLLIDSINLAFNYSNNIIIEKFLKGTEYT. Mg(2+) is bound by residues D257, E270, and N272. The active site involves S281.

This sequence belongs to the D-alanine--D-alanine ligase family. Mg(2+) serves as cofactor. Mn(2+) is required as a cofactor.

Its subcellular location is the cytoplasm. It carries out the reaction 2 D-alanine + ATP = D-alanyl-D-alanine + ADP + phosphate + H(+). It functions in the pathway cell wall biogenesis; peptidoglycan biosynthesis. Its function is as follows. Cell wall formation. The protein is D-alanine--D-alanine ligase of Buchnera aphidicola subsp. Schizaphis graminum (strain Sg).